The chain runs to 393 residues: Enoyl-[acyl-carrier-protein] reductase [NADH] (393 aa).

NAD(+) is bound by residues 48–53, 74–75, 111–112, and 139–140; these read GSSTGY, FE, DA, and LA. Tyr225 provides a ligand contact to substrate. Tyr235 serves as the catalytic Proton donor. NAD(+) contacts are provided by residues Lys244 and 273–275; that span reads LVT.

It belongs to the TER reductase family. As to quaternary structure, monomer.

It catalyses the reaction a 2,3-saturated acyl-[ACP] + NAD(+) = a (2E)-enoyl-[ACP] + NADH + H(+). It participates in lipid metabolism; fatty acid biosynthesis. Its function is as follows. Involved in the final reduction of the elongation cycle of fatty acid synthesis (FAS II). Catalyzes the reduction of a carbon-carbon double bond in an enoyl moiety that is covalently linked to an acyl carrier protein (ACP). This chain is Enoyl-[acyl-carrier-protein] reductase [NADH], found in Pseudoalteromonas atlantica (strain T6c / ATCC BAA-1087).